Reading from the N-terminus, the 107-residue chain is Ferredoxin (107 aa).

Positions 1-8 (MVSGVSRN) are excised as a propeptide. C45, C51, and C54 together coordinate [2Fe-2S] cluster.

Requires [2Fe-2S] cluster as cofactor.

It is found in the hydrogenosome. In terms of biological role, ferredoxins are iron-sulfur proteins that transfer electrons in a wide variety of metabolic reactions. The polypeptide is Ferredoxin (Psalteriomonas lanterna (Amoeboflagellate)).